The primary structure comprises 130 residues: MAQVQYYGTGRRKSSVARVRLVPGDGKIVINNRDWEDYIPFAALREVIKQPLVATETLGNYDVLVNVHGGGYTGQAGAIRHGVARALLQVAPEYRPALKSAGLLTRDSRMKERKKPGLKGARRAPQFSKR.

A disordered region spans residues 102 to 130 (GLLTRDSRMKERKKPGLKGARRAPQFSKR). Residues 111-130 (KERKKPGLKGARRAPQFSKR) are compositionally biased toward basic residues.

Belongs to the universal ribosomal protein uS9 family.

In Listeria monocytogenes serovar 1/2a (strain ATCC BAA-679 / EGD-e), this protein is Small ribosomal subunit protein uS9.